A 457-amino-acid polypeptide reads, in one-letter code: Bifunctional protein GlmU (457 aa).

The interval 1–229 (MSNSAKSVVI…LSEMEGVNNR (229 aa)) is pyrophosphorylase. Residues 11–14 (LAAG), K25, Q76, 81–82 (GT), 103–105 (YGD), G140, E154, N169, and N227 each bind UDP-N-acetyl-alpha-D-glucosamine. D105 contacts Mg(2+). N227 contacts Mg(2+). The segment at 230–250 (LQLSALERIYQSEQAEQLLLA) is linker. The interval 251–457 (GVMLLDPARF…GWKRPVKEKK (207 aa)) is N-acetyltransferase. The UDP-N-acetyl-alpha-D-glucosamine site is built by R333 and K351. Residue H363 is the Proton acceptor of the active site. Y366 and N377 together coordinate UDP-N-acetyl-alpha-D-glucosamine. Acetyl-CoA-binding positions include A380, 386-387 (NY), S405, A423, and R440.

In the N-terminal section; belongs to the N-acetylglucosamine-1-phosphate uridyltransferase family. This sequence in the C-terminal section; belongs to the transferase hexapeptide repeat family. As to quaternary structure, homotrimer. Requires Mg(2+) as cofactor.

The protein localises to the cytoplasm. It catalyses the reaction alpha-D-glucosamine 1-phosphate + acetyl-CoA = N-acetyl-alpha-D-glucosamine 1-phosphate + CoA + H(+). The catalysed reaction is N-acetyl-alpha-D-glucosamine 1-phosphate + UTP + H(+) = UDP-N-acetyl-alpha-D-glucosamine + diphosphate. Its pathway is nucleotide-sugar biosynthesis; UDP-N-acetyl-alpha-D-glucosamine biosynthesis; N-acetyl-alpha-D-glucosamine 1-phosphate from alpha-D-glucosamine 6-phosphate (route II): step 2/2. It functions in the pathway nucleotide-sugar biosynthesis; UDP-N-acetyl-alpha-D-glucosamine biosynthesis; UDP-N-acetyl-alpha-D-glucosamine from N-acetyl-alpha-D-glucosamine 1-phosphate: step 1/1. The protein operates within bacterial outer membrane biogenesis; LPS lipid A biosynthesis. Catalyzes the last two sequential reactions in the de novo biosynthetic pathway for UDP-N-acetylglucosamine (UDP-GlcNAc). The C-terminal domain catalyzes the transfer of acetyl group from acetyl coenzyme A to glucosamine-1-phosphate (GlcN-1-P) to produce N-acetylglucosamine-1-phosphate (GlcNAc-1-P), which is converted into UDP-GlcNAc by the transfer of uridine 5-monophosphate (from uridine 5-triphosphate), a reaction catalyzed by the N-terminal domain. The sequence is that of Bifunctional protein GlmU from Photorhabdus laumondii subsp. laumondii (strain DSM 15139 / CIP 105565 / TT01) (Photorhabdus luminescens subsp. laumondii).